The primary structure comprises 446 residues: Zinc finger protein 19 (446 aa).

The 72-residue stretch at 2 to 73 (VTFEDVAVHF…EAQDDPPAET (72 aa)) folds into the KRAB domain. 9 C2H2-type zinc fingers span residues 149-171 (FICE…QRIH), 177-199 (FECS…QRIH), 205-227 (YQCE…QRIH), 233-255 (YYCT…QRIH), 261-283 (YECN…QKIH), 289-311 (YECN…QRIH), 317-339 (YSCK…QRIH), 345-367 (FDCV…LRIH), and 373-395 (YVCD…QRIH). A C2H2-type 10; degenerate zinc finger spans residues 401–423 (YEYSKYEKAFGTSSQLGHLEHVH).

The protein belongs to the krueppel C2H2-type zinc-finger protein family.

The protein localises to the nucleus. In terms of biological role, may be involved in transcriptional regulation. This chain is Zinc finger protein 19 (ZNF19), found in Pongo abelii (Sumatran orangutan).